A 353-amino-acid chain; its full sequence is Protein-glutamate methylesterase/protein-glutamine glutaminase 4 (353 aa).

The 118-residue stretch at 7–124 (RILVAEDSPT…SPDFDADSRR (118 aa)) folds into the Response regulatory domain. The residue at position 58 (D58) is a 4-aspartylphosphate. Positions 158–350 (PVSPTRPGVV…SRLTSAFRGS (193 aa)) constitute a CheB-type methylesterase domain. Catalysis depends on residues S172, H199, and D292.

Belongs to the CheB family. Phosphorylated by CheA. Phosphorylation of the N-terminal regulatory domain activates the methylesterase activity.

The protein resides in the cytoplasm. It carries out the reaction [protein]-L-glutamate 5-O-methyl ester + H2O = L-glutamyl-[protein] + methanol + H(+). It catalyses the reaction L-glutaminyl-[protein] + H2O = L-glutamyl-[protein] + NH4(+). Its function is as follows. Involved in chemotaxis. Part of a chemotaxis signal transduction system that modulates chemotaxis in response to various stimuli. Catalyzes the demethylation of specific methylglutamate residues introduced into the chemoreceptors (methyl-accepting chemotaxis proteins or MCP) by CheR. Also mediates the irreversible deamidation of specific glutamine residues to glutamic acid. This chain is Protein-glutamate methylesterase/protein-glutamine glutaminase 4, found in Myxococcus xanthus (strain DK1622).